The following is a 574-amino-acid chain: Septation ring formation regulator EzrA (574 aa).

The Extracellular portion of the chain corresponds to 1-7; the sequence is MSSGLIL. Residues 8 to 26 traverse the membrane as a helical segment; that stretch reads LIVAIVLLVIIAYLVGVII. Residues 27–574 are Cytoplasmic-facing; the sequence is RKRNDTLITS…YEKTRERIRF (548 aa). Coiled-coil stretches lie at residues 102–131, 161–190, 276–379, and 459–493; these read NFIRAKHEINSVESQLNLVEEDITAIREAL, ENEDNFGSTMAEIEKQMKNIEAEFSQFVAL, VTLD…QQEK, and QLEALMDELSRGRINIEAVSRLSEVATAAIANLEE.

It belongs to the EzrA family.

The protein localises to the cell membrane. Its function is as follows. Negative regulator of FtsZ ring formation; modulates the frequency and position of FtsZ ring formation. Inhibits FtsZ ring formation at polar sites. Interacts either with FtsZ or with one of its binding partners to promote depolymerization. This is Septation ring formation regulator EzrA from Streptococcus equi subsp. zooepidemicus (strain MGCS10565).